A 115-amino-acid polypeptide reads, in one-letter code: NADH-ubiquinone oxidoreductase chain 3 (115 aa).

The next 3 membrane-spanning stretches (helical) occupy residues 4 to 24 (LLAM…AFWL), 55 to 75 (FFLV…LLPI), and 87 to 107 (MMLT…YEWI).

It belongs to the complex I subunit 3 family. Core subunit of respiratory chain NADH dehydrogenase (Complex I) which is composed of 45 different subunits. Interacts with TMEM186. Interacts with TMEM242.

It is found in the mitochondrion inner membrane. The enzyme catalyses a ubiquinone + NADH + 5 H(+)(in) = a ubiquinol + NAD(+) + 4 H(+)(out). Functionally, core subunit of the mitochondrial membrane respiratory chain NADH dehydrogenase (Complex I) which catalyzes electron transfer from NADH through the respiratory chain, using ubiquinone as an electron acceptor. Essential for the catalytic activity of complex I. The chain is NADH-ubiquinone oxidoreductase chain 3 from Neotoma floridana (Eastern woodrat).